The chain runs to 528 residues: Gamma-taxilin (528 aa).

The span at 1 to 10 shows a compositional bias: basic and acidic residues; it reads MATRVEEAAR. The interval 1-36 is disordered; the sequence is MATRVEEAARGRGGGAEEATEAGRGGRRRSPRQKFE. Omega-N-methylarginine is present on residues R12 and R24. A phosphoserine mark is found at S79, S86, S97, and S105. The disordered stretch occupies residues 102–130; that stretch reads TQESREEIPGGEARTDPPDGQQDSECNRN. Residues 104–118 show a composition bias toward basic and acidic residues; the sequence is ESREEIPGGEARTDP. Positions 153-464 form a coiled coil; it reads EEKLAALCKK…LKEQVSIKAA (312 aa). Y283 is subject to Phosphotyrosine. A disordered region spans residues 486 to 528; sequence HKELNTSSKRALGAHLEAEPKSQRSAVQKPPSTGSAPAIESVD. Over residues 508–520 the composition is skewed to polar residues; it reads QRSAVQKPPSTGS. Residue S517 is modified to Phosphoserine.

This sequence belongs to the taxilin family. In terms of assembly, binds to the C-terminal coiled coil region of syntaxin family members STX1A, STX3A and STX4A. Forms a heterodimer with ATF4 in osteoblasts. In terms of tissue distribution, ubiquitously expressed. Expressed at high level in heart and skeletal muscle. Expressed in brain, placenta, lung, liver, kidney and pancreas.

The protein localises to the nucleus membrane. The protein resides in the cytoplasm. It localises to the cytosol. May be involved in intracellular vesicle traffic. Inhibits ATF4-mediated transcription, possibly by dimerizing with ATF4 to form inactive dimers that cannot bind DNA. May be involved in regulating bone mass density through an ATF4-dependent pathway. May be involved in cell cycle progression. The chain is Gamma-taxilin (TXLNG) from Homo sapiens (Human).